The sequence spans 292 residues: MTIVVGYLAGKVGPSALHLAVRVARMHKTSLTVATIVRRHWPTPSLARVDAEYELWSEQLAAASAREAQRYLRRLADGIEVSYHHRAHRSVSAGLLDVVEELEAEVLVLGSFPSGRRARVLIGSTADRLLHSSPVPVAITPRRYRCYTDRLTRLSCGYSATSGSVDVVRRCGHLASRYGVPMRVITFAVRGRTMYPPEVGLHAEASVLEAWAAQARELLEKLRINGVVSEDVVLQVVTGNGWAQALDAADWQDGEILALGTSPFGDVARVFLGSWSGKIIRYSPVPVLVLPG.

The protein belongs to the universal stress protein A family.

The chain is Universal stress protein Mb2346c from Mycobacterium bovis (strain ATCC BAA-935 / AF2122/97).